The primary structure comprises 198 residues: uncharacterized protein (198 aa).

Disordered regions lie at residues 15 to 69 and 172 to 198; these read RLGQ…KDTR and FSVK…LWGL. Basic and acidic residues-rich tracts occupy residues 37–49 and 56–69; these read HKSF…DQSR and FNEK…KDTR. Low complexity predominate over residues 176-186; sequence ESSNLSNNDSD. The segment covering 187–198 has biased composition (acidic residues); that stretch reads ASLDEDTLLWGL.

It is found in the nucleus. This is an uncharacterized protein from Schizosaccharomyces pombe (strain 972 / ATCC 24843) (Fission yeast).